The sequence spans 200 residues: Cysteine dioxygenase type 1 (200 aa).

Positions 86, 88, and 140 each coordinate Fe cation. A cross-link (3'-(S-cysteinyl)-tyrosine (Cys-Tyr)) is located at residues 93–157 (CFLKMLQGNL…TEPAVSLHLY (65 aa)).

This sequence belongs to the cysteine dioxygenase family. In terms of assembly, monomer. Fe(2+) serves as cofactor. Ni(2+) is required as a cofactor. Requires Zn(2+) as cofactor. Post-translationally, the thioether cross-link between Cys-93 and Tyr-157 plays a structural role through stabilizing the Fe(2+) ion, and prevents the production of highly damaging free hydroxyl radicals by holding the oxygen radical via hydroxyl hydrogen. In terms of tissue distribution, highly expressed in liver and placenta. Low expression in heart, brain and pancreas. Also detected in hepatoblastoma Hep-G2 cells.

It catalyses the reaction L-cysteine + O2 = 3-sulfino-L-alanine + H(+). Its pathway is organosulfur biosynthesis; taurine biosynthesis; hypotaurine from L-cysteine: step 1/2. In terms of biological role, catalyzes the oxidation of cysteine to cysteine sulfinic acid with addition of molecular dioxygen. The sequence is that of Cysteine dioxygenase type 1 (CDO1) from Homo sapiens (Human).